We begin with the raw amino-acid sequence, 81 residues long: Elicitor peptide 4 (81 aa).

Positions 1–54 (MERGVSYYLWIPFKFIHQTFGSLLLKLLGLRSPSDHSFPEDGEEEVKVVEVSSR) are excised as a propeptide. Positions 57–81 (PGKKNVLKKSRESSGKPGGTNKKPF) are disordered.

It belongs to the brassicaceae elicitor peptide family.

Its function is as follows. Elicitor of plant defense. This Arabidopsis thaliana (Mouse-ear cress) protein is Elicitor peptide 4 (PEP4).